The sequence spans 431 residues: Tryptophan synthase beta chain (431 aa).

Lys-109 carries the post-translational modification N6-(pyridoxal phosphate)lysine.

This sequence belongs to the TrpB family. Tetramer of two alpha and two beta chains. It depends on pyridoxal 5'-phosphate as a cofactor.

The enzyme catalyses (1S,2R)-1-C-(indol-3-yl)glycerol 3-phosphate + L-serine = D-glyceraldehyde 3-phosphate + L-tryptophan + H2O. It functions in the pathway amino-acid biosynthesis; L-tryptophan biosynthesis; L-tryptophan from chorismate: step 5/5. Its function is as follows. The beta subunit is responsible for the synthesis of L-tryptophan from indole and L-serine. This chain is Tryptophan synthase beta chain, found in Deinococcus radiodurans (strain ATCC 13939 / DSM 20539 / JCM 16871 / CCUG 27074 / LMG 4051 / NBRC 15346 / NCIMB 9279 / VKM B-1422 / R1).